The chain runs to 84 residues: Putative defensin-like protein 114 (84 aa).

The first 24 residues, 1–24 (MAITKKCFAAFVLILLFVMPFVYC), serve as a signal peptide directing secretion. Disulfide bonds link Cys41–Cys81, Cys47–Cys69, Cys54–Cys79, and Cys58–Cys80.

This sequence belongs to the DEFL family.

The protein localises to the secreted. This chain is Putative defensin-like protein 114, found in Arabidopsis thaliana (Mouse-ear cress).